A 138-amino-acid polypeptide reads, in one-letter code: MAPK kinase substrate protein At1g80180 (138 aa).

The disordered stretch occupies residues 52–138 (TSEVQDQTTK…RKRPAKRRSR (87 aa)). The span at 69–81 (KPIRTDGGMERSR) shows a compositional bias: basic and acidic residues. Ser98 carries the phosphoserine modification. Ser105 carries the phosphoserine; by MAPK6 modification. A compositionally biased stretch (basic residues) spans 121-138 (QPGKKVNQRKRPAKRRSR).

As to expression, expressed in developing cotyledons, mature cotyledons, cotyledon epidermis and stomata.

Its function is as follows. May play a role in the regulation of stomata patterning. In Arabidopsis thaliana (Mouse-ear cress), this protein is MAPK kinase substrate protein At1g80180.